The chain runs to 108 residues: Small ribosomal subunit protein uS10 (108 aa).

This sequence belongs to the universal ribosomal protein uS10 family. As to quaternary structure, part of the 30S ribosomal subunit.

Involved in the binding of tRNA to the ribosomes. This Rhodopirellula baltica (strain DSM 10527 / NCIMB 13988 / SH1) protein is Small ribosomal subunit protein uS10.